Reading from the N-terminus, the 551-residue chain is Glucose-6-phosphate isomerase (551 aa).

Glu352 acts as the Proton donor in catalysis. Catalysis depends on residues His383 and Lys511.

This sequence belongs to the GPI family.

It is found in the cytoplasm. It carries out the reaction alpha-D-glucose 6-phosphate = beta-D-fructose 6-phosphate. The protein operates within carbohydrate biosynthesis; gluconeogenesis. It participates in carbohydrate degradation; glycolysis; D-glyceraldehyde 3-phosphate and glycerone phosphate from D-glucose: step 2/4. In terms of biological role, catalyzes the reversible isomerization of glucose-6-phosphate to fructose-6-phosphate. The polypeptide is Glucose-6-phosphate isomerase (Chlorobium luteolum (strain DSM 273 / BCRC 81028 / 2530) (Pelodictyon luteolum)).